Consider the following 729-residue polypeptide: Leucine-rich repeat flightless-interacting protein 1 (729 aa).

Residue threonine 2 is modified to N-acetylthreonine. Serine 16 carries the post-translational modification Phosphoserine. Residues isoleucine 40–serine 65 show a composition bias toward basic and acidic residues. The segment at isoleucine 40 to glutamate 98 is disordered. The span at serine 78–serine 94 shows a compositional bias: low complexity. 6 positions are modified to phosphoserine: serine 83, serine 84, serine 88, aspartate 90, serine 92, and threonine 97. Residues serine 94–lysine 194 adopt a coiled-coil conformation. A Glycyl lysine isopeptide (Lys-Gly) (interchain with G-Cter in SUMO1) cross-link involves residue lysine 249. A disordered region spans residues valine 253–serine 729. The span at glutamate 260–proline 272 shows a compositional bias: polar residues. Residues aspartate 277–glutamate 297 show a composition bias toward basic and acidic residues. Serine 302 is modified (phosphoserine). The span at glutamine 313–leucine 326 shows a compositional bias: polar residues. Basic and acidic residues predominate over residues lysine 327–serine 343. Polar residues predominate over residues arginine 344–cysteine 354. Residues serine 346 and serine 348 each carry the phosphoserine modification. Composition is skewed to basic and acidic residues over residues lysine 435 to leucine 445 and lysine 482 to isoleucine 494. Residues glutamate 465 to proline 567 are DNA-binding. Over residues isoleucine 506–glutamine 523 the composition is skewed to polar residues. Phosphoserine occurs at positions 538 and 547. The span at lysine 550 to alanine 564 shows a compositional bias: basic residues. Positions glutamine 608–valine 618 are enriched in basic and acidic residues. 2 positions are modified to phosphoserine: serine 614 and serine 670. Composition is skewed to polar residues over residues cysteine 667–glycine 684 and leucine 693–glycine 710. Residues alanine 713–serine 729 are compositionally biased toward basic and acidic residues.

The protein belongs to the LRRFIP family. As to quaternary structure, homodimer. May also form higher oligomers. Interacts with FLII. Interacts with MYD88. Competes with FLII for MyD88-binding, even in the absence of LPS. Ubiquitously expressed.

The protein resides in the nucleus. Its subcellular location is the cytoplasm. Transcriptional repressor which preferentially binds to the GC-rich consensus sequence (5'-AGCCCCCGGCG-3') and may regulate expression of TNF, EGFR and PDGFA. May control smooth muscle cells proliferation following artery injury through PDGFA repression. May also bind double-stranded RNA. Positively regulates Toll-like receptor (TLR) signaling in response to agonist probably by competing with the negative FLII regulator for MYD88-binding. The chain is Leucine-rich repeat flightless-interacting protein 1 (Lrrfip1) from Mus musculus (Mouse).